Consider the following 443-residue polypeptide: Packaging protein 1 (443 aa).

The segment at 1-75 is disordered; sequence MSGAADGTVP…PEAAQPPPSR (75 aa). The span at 13–56 shows a compositional bias: basic and acidic residues; that stretch reads EDTHQEDSGERECEQRPVHSGREATGESDPALERPDHGERHGPE. 169–176 is an ATP binding site; it reads GPTGSGKS. The segment at 433 to 443 is DNA-binding; the sequence is VSYANKRKWYD.

The protein belongs to the adenoviridae packaging protein 1 family. Homodimer. Part of a genome packaging complex composed of packaging proteins 1, 2 and 3; this complex specifically binds to the packaging sequence on the left end of viral genomic DNA and performs packaging of the viral genome. Interacts with protein 33K.

It localises to the virion. It is found in the host nucleus. The protein resides in the host nucleoplasm. Its subcellular location is the host nucleolus. Its function is as follows. Component of the packaging machinery which encapsidates the viral DNA into preformed capsids and transcriptional activator of the viral major late promoter (MLP). Binds, along with packaging proteins 2 and 3, to the specific packaging sequence on the left end of viral genomic DNA and displays ATPase activity thereby providing the power stroke of the packaging machinery. The activity of packaging protein IVa2 is stimulated by protein 33K which acts as a terminase. May be the protein that pumps DNA into the capsid powered by ATP hydrolysis. Specifically binds to the 5'-CG-3' nucleotides of the repeats making up the packaging sequence. Component of the DEF-A and DEF-B transcription factors that bind downstream elements of the major late promoter (MLP), and stimulate transcription from the MLP after initiation of viral DNA replication. DEF-A is a heterodimer packaging proteins 1 and 2 and DEF-B is a homodimer of packaging protein 1. This is Packaging protein 1 from Pantherophis guttatus (Corn snake).